A 392-amino-acid chain; its full sequence is Succinate--CoA ligase [ADP-forming] subunit beta (392 aa).

The ATP-grasp domain occupies 9-236 (KELFAAHGVP…PSAADPLEAK (228 aa)). ATP is bound by residues lysine 45, 52 to 54 (GRG), valine 94, and glutamate 99. Positions 191 and 205 each coordinate Mg(2+). Residues asparagine 256 and 318–320 (GIT) contribute to the substrate site.

Belongs to the succinate/malate CoA ligase beta subunit family. Heterotetramer of two alpha and two beta subunits. Mg(2+) is required as a cofactor.

It carries out the reaction succinate + ATP + CoA = succinyl-CoA + ADP + phosphate. The enzyme catalyses GTP + succinate + CoA = succinyl-CoA + GDP + phosphate. The protein operates within carbohydrate metabolism; tricarboxylic acid cycle; succinate from succinyl-CoA (ligase route): step 1/1. Succinyl-CoA synthetase functions in the citric acid cycle (TCA), coupling the hydrolysis of succinyl-CoA to the synthesis of either ATP or GTP and thus represents the only step of substrate-level phosphorylation in the TCA. The beta subunit provides nucleotide specificity of the enzyme and binds the substrate succinate, while the binding sites for coenzyme A and phosphate are found in the alpha subunit. This is Succinate--CoA ligase [ADP-forming] subunit beta from Acidothermus cellulolyticus (strain ATCC 43068 / DSM 8971 / 11B).